The sequence spans 424 residues: Phosphoprotein associated with glycosphingolipid-enriched microdomains 1 (424 aa).

Topologically, residues 1 to 17 are extracellular; it reads MGPAGSALSSGQMQMQM. Residues 18-38 form a helical; Signal-anchor for type III membrane protein membrane-spanning segment; sequence VLWGSLAAVAMFFLITFLILL. 2 S-palmitoyl cysteine lipidation sites follow: Cys39 and Cys42. At 39-424 the chain is on the cytoplasmic side; it reads CSSCDRDKKP…LQQGRDVTRL (386 aa). Residues Ser52 and Ser63 each carry the phosphoserine modification. Tyr107 is subject to Phosphotyrosine; by LYN. Ser157 carries the post-translational modification Phosphoserine. 3 positions are modified to phosphotyrosine: Tyr165, Tyr183, and Tyr224. The disordered stretch occupies residues 194–347; it reads DKSQGGKSKS…GPPQRSSSSC (154 aa). Positions 215 to 230 are enriched in basic and acidic residues; sequence AEGKADFAEYASVDRN. Residue Ser226 is modified to Phosphoserine. Over residues 236–247 the composition is skewed to polar residues; that stretch reads STNAESILGTSS. A Phosphotyrosine; by FYN and LYN modification is found at Tyr314. The segment at 314–317 is interaction with CSK; sequence YSSV. Residues 331-347 are compositionally biased toward polar residues; the sequence is STCQCPQGPPQRSSSSC. Ser346 is subject to Phosphoserine. Phosphotyrosine occurs at positions 351, 381, and 409. The disordered stretch occupies residues 361–424; sequence PNSISMLPPA…LQQGRDVTRL (64 aa). An interaction with NHERF1 region spans residues 422–424; sequence TRL.

In terms of assembly, interacts with NHERF1/EBP50. In resting T-cells, part of a PAG1-NHERF1-MSN complex which is disrupted upon TCR activation. When phosphorylated, interacts with CSK. Identified in a complex with LYN and STAT3. Interacts with LYN. In terms of processing, palmitoylated. Phosphorylated by FYN on Tyr-314 in resting T-cells; which promotes interaction with CSK. Dephosphorylated by PTPRC/CD45 upon TCR activation; which leads to CSK dissociation. May also be dephosphorylated by PTPN11. Hyperphosphorylated in mast cells upon FCER1 activation. Phosphorylated by LYN in response to EPO. Ubiquitously expressed, with highest levels in developing brain, lung, thymus, spleen and testis. Present in mast cells.

The protein localises to the cell membrane. Functionally, negatively regulates TCR (T-cell antigen receptor)-mediated signaling in T-cells and FCER1 (high affinity immunoglobulin epsilon receptor)-mediated signaling in mast cells. Promotes CSK activation and recruitment to lipid rafts, which results in LCK inhibition. Inhibits immunological synapse formation by preventing dynamic arrangement of lipid raft proteins. May be involved in cell adhesion signaling. The sequence is that of Phosphoprotein associated with glycosphingolipid-enriched microdomains 1 (Pag1) from Rattus norvegicus (Rat).